A 262-amino-acid polypeptide reads, in one-letter code: Small ribosomal subunit protein uS2 (262 aa).

It belongs to the universal ribosomal protein uS2 family.

This is Small ribosomal subunit protein uS2 from Roseiflexus sp. (strain RS-1).